A 345-amino-acid chain; its full sequence is L-threonine 3-dehydrogenase (345 aa).

Zn(2+) is bound at residue cysteine 42. Active-site charge relay system residues include threonine 44 and histidine 47. Zn(2+) is bound by residues histidine 67, glutamate 68, cysteine 97, cysteine 100, cysteine 103, and cysteine 111. Residues isoleucine 179, aspartate 199, arginine 204, 266–268 (LGI), and 290–291 (IY) contribute to the NAD(+) site.

It belongs to the zinc-containing alcohol dehydrogenase family. Homotetramer. It depends on Zn(2+) as a cofactor.

The protein resides in the cytoplasm. The catalysed reaction is L-threonine + NAD(+) = (2S)-2-amino-3-oxobutanoate + NADH + H(+). It participates in amino-acid degradation; L-threonine degradation via oxydo-reductase pathway; glycine from L-threonine: step 1/2. Its function is as follows. Catalyzes the NAD(+)-dependent oxidation of L-threonine to 2-amino-3-ketobutyrate. This is L-threonine 3-dehydrogenase from Sinorhizobium fredii (strain NBRC 101917 / NGR234).